We begin with the raw amino-acid sequence, 91 residues long: MANKQDLIAKVAAATELTKKDSAAAVDAVFAAVTEYLSKGEKVQLIGFGNFEVRERAARKGRNPQTGKETKIAASKVPAFKAGKALKDAVK.

Belongs to the bacterial histone-like protein family.

Functionally, histone-like DNA-binding protein which is capable of wrapping DNA to stabilize it, and thus to prevent its denaturation under extreme environmental conditions. Also seems to act as a fortuitous virulence factor in delayed sequelae by binding to heparan sulfate-proteoglycans in the extracellular matrix of target organs and acting as a nidus for in situ immune complex formation. The polypeptide is DNA-binding protein HU (hup) (Streptococcus gordonii).